The primary structure comprises 1233 residues: uncharacterized protein (1233 aa).

Disordered regions lie at residues 32 to 51 (SETS…TPKP), 510 to 529 (ATTN…PVPD), and 882 to 915 (EVIE…IERS). Acidic residues-rich tracts occupy residues 513 to 529 (NEEE…PVPD) and 882 to 905 (EVIE…EDEG). The segment covering 906-915 (DNKQRVIERS) has biased composition (basic and acidic residues).

This is an uncharacterized protein from Dictyostelium discoideum (Social amoeba).